We begin with the raw amino-acid sequence, 323 residues long: MIDKYGRSIDYLRVSITDRCNLRCIYCMPPQGVTFKTHSSILRYEEIIKIVEVGTELGIKKVRITGGEPLVRQGVVNLIKELRKIPELEDITMTTNGVLLPKYAFALKRAGLSRVNISLDSLNPDTYKTITRRGEFSQAIEGIKAALEVGLNPVKINTVVMKGINDNELENFVNLTIDKDLHVRFIEYMPMGETSLLSGNYYVSLNEFKEIIIDKMGMVPVNIQNNGPSKDFKVPGAKGTVGFITAISHNFCSTCNRMRLTADGFLRPCLASDVEVNMRDEDGKISSEGVREKFEKALLLKPISHNFYKNDFFPKKNMSQIGG.

One can recognise a Radical SAM core domain in the interval 4–228 (KYGRSIDYLR…VPVNIQNNGP (225 aa)). A GTP-binding site is contributed by R13. [4Fe-4S] cluster-binding residues include C20 and C24. Y26 is an S-adenosyl-L-methionine binding site. C27 contributes to the [4Fe-4S] cluster binding site. R63 contributes to the GTP binding site. G67 provides a ligand contact to S-adenosyl-L-methionine. T94 is a GTP binding site. S118 serves as a coordination point for S-adenosyl-L-methionine. K155 serves as a coordination point for GTP. M189 serves as a coordination point for S-adenosyl-L-methionine. The [4Fe-4S] cluster site is built by C252 and C255. 257 to 259 (RMR) serves as a coordination point for GTP. A [4Fe-4S] cluster-binding site is contributed by C269.

Belongs to the radical SAM superfamily. MoaA family. As to quaternary structure, monomer and homodimer. It depends on [4Fe-4S] cluster as a cofactor.

The enzyme catalyses GTP + AH2 + S-adenosyl-L-methionine = (8S)-3',8-cyclo-7,8-dihydroguanosine 5'-triphosphate + 5'-deoxyadenosine + L-methionine + A + H(+). The protein operates within cofactor biosynthesis; molybdopterin biosynthesis. Functionally, catalyzes the cyclization of GTP to (8S)-3',8-cyclo-7,8-dihydroguanosine 5'-triphosphate. The protein is GTP 3',8-cyclase of Petrotoga mobilis (strain DSM 10674 / SJ95).